A 436-amino-acid chain; its full sequence is UDP-glucuronate 4-epimerase 5 (436 aa).

A run of 2 helical transmembrane segments spans residues 36-56 (LTLW…LSPP) and 95-115 (GLTV…SIAL). 97–128 (TVLVTGASGFVGTHVSIALRRRGDGVLGLDNF) provides a ligand contact to NAD(+). Y247 acts as the Proton acceptor in catalysis.

It belongs to the NAD(P)-dependent epimerase/dehydratase family. In terms of assembly, homodimer. In leaves, pollen and siliques, but not in roots or flowers.

The protein localises to the golgi apparatus. The protein resides in the golgi stack membrane. It carries out the reaction UDP-alpha-D-glucuronate = UDP-alpha-D-galacturonate. Its function is as follows. Involved in the synthesis of the negatively charged monosaccharide that forms the backbone of pectic cell wall components. This Arabidopsis thaliana (Mouse-ear cress) protein is UDP-glucuronate 4-epimerase 5 (GAE5).